Here is a 61-residue protein sequence, read N- to C-terminus: Phosphoenolpyruvate synthase (61 aa).

This sequence belongs to the PEP-utilizing enzyme family. The cofactor is Mg(2+).

The catalysed reaction is pyruvate + ATP + H2O = phosphoenolpyruvate + AMP + phosphate + 2 H(+). The protein operates within carbohydrate biosynthesis; gluconeogenesis. Catalyzes the phosphorylation of pyruvate to phosphoenolpyruvate. The chain is Phosphoenolpyruvate synthase (ppsA) from Enterobacter agglomerans (Erwinia herbicola).